The primary structure comprises 426 residues: 3-isopropylmalate dehydratase large subunit (426 aa).

3 residues coordinate [4Fe-4S] cluster: cysteine 307, cysteine 367, and cysteine 370.

The protein belongs to the aconitase/IPM isomerase family. LeuC type 2 subfamily. Heterodimer of LeuC and LeuD. [4Fe-4S] cluster serves as cofactor.

The catalysed reaction is (2R,3S)-3-isopropylmalate = (2S)-2-isopropylmalate. The protein operates within amino-acid biosynthesis; L-leucine biosynthesis; L-leucine from 3-methyl-2-oxobutanoate: step 2/4. In terms of biological role, catalyzes the isomerization between 2-isopropylmalate and 3-isopropylmalate, via the formation of 2-isopropylmaleate. This is 3-isopropylmalate dehydratase large subunit from Aliarcobacter butzleri (strain RM4018) (Arcobacter butzleri).